A 550-amino-acid polypeptide reads, in one-letter code: Zorya protein ZorA (550 aa).

Transmembrane regions (helical) follow at residues 16–36 (TLITNIFIWAVIFVFLSAWWC), 52–72 (LMGALGILGTFIGIIIGLLNF), and 92–112 (FITSIVGMFFAILFNGMDAFF).

Belongs to the MotA family.

The protein localises to the cell inner membrane. Functionally, component of antiviral defense system Zorya type II, composed of ZorA, ZorB and ZorE. Expression of Zorya type II in E.coli (strain MG1655) confers resistance to phages SECphi7 and T7. While most T7 infected Zorya-containing cells undergo abortive infection, a minority produce viable phage progeny. These eventually accumulate to a high multiplicity of infection, leading to culture collapse by 170 minutes after initial infection. ZorA and ZorB probably assemble in the cell inner membrane and exert their effect there. This chain is Zorya protein ZorA, found in Escherichia coli (strain ATCC 8739 / DSM 1576 / NBRC 3972 / NCIMB 8545 / WDCM 00012 / Crooks).